Consider the following 247-residue polypeptide: Ribonuclease PH (247 aa).

Phosphate is bound by residues arginine 87 and 125-127; that span reads GTR.

This sequence belongs to the RNase PH family. In terms of assembly, homohexameric ring arranged as a trimer of dimers.

It carries out the reaction tRNA(n+1) + phosphate = tRNA(n) + a ribonucleoside 5'-diphosphate. Its function is as follows. Phosphorolytic 3'-5' exoribonuclease that plays an important role in tRNA 3'-end maturation. Removes nucleotide residues following the 3'-CCA terminus of tRNAs; can also add nucleotides to the ends of RNA molecules by using nucleoside diphosphates as substrates, but this may not be physiologically important. Probably plays a role in initiation of 16S rRNA degradation (leading to ribosome degradation) during starvation. The protein is Ribonuclease PH of Nostoc sp. (strain PCC 7120 / SAG 25.82 / UTEX 2576).